We begin with the raw amino-acid sequence, 630 residues long: Replication protein A 70 kDa DNA-binding subunit B (630 aa).

The segment at residues isoleucine 200 to threonine 282 is a DNA-binding region (OB). The C4-type zinc-finger motif lies at cysteine 496–cysteine 516.

This sequence belongs to the replication factor A protein 1 family. Heterotrimer of RPA1, RPA2 and RPA3 (canonical replication protein A complex). Interacts with RPA2A. In terms of tissue distribution, expressed in root tips, roots, shoot apical meristem (SAM) and young leaves, and at lower levels in mature leaves, flag leaves and ears.

It is found in the nucleus. Functionally, component of the replication protein A complex (RPA) required for DNA recombination, repair and replication. The activity of RPA is mediated by single-stranded DNA binding and protein interactions. Probably involved in repair of double-strand DNA breaks (DSBs) induced by genotoxic stresses. The sequence is that of Replication protein A 70 kDa DNA-binding subunit B (RPA1B) from Oryza sativa subsp. japonica (Rice).